Consider the following 895-residue polypeptide: Probable aminodeoxychorismate synthase, chloroplastic (895 aa).

Positions 1-45 are disordered; sequence MAALRLPTPPPPRAPAPWLHSSHRRRVAAPRGAGGGGGGGGAVPP. A chloroplast-targeting transit peptide spans 1–48; sequence MAALRLPTPPPPRAPAPWLHSSHRRRVAAPRGAGGGGGGGGAVPPPPV. Positions 32 to 42 are enriched in gly residues; that stretch reads GAGGGGGGGGA. The region spanning 49-307 is the Glutamine amidotransferase type-1 domain; that stretch reads RTLLIDNYDS…KKITTDFGLQ (259 aa). The active-site Nucleophile is C135. Residues H281 and E283 contribute to the active site. The tract at residues 387–875 is PABB component; it reads IFSVLFGHHS…KAKAPTKVVE (489 aa).

The protein in the C-terminal section; belongs to the anthranilate synthase component I family.

The protein localises to the plastid. It localises to the chloroplast. The catalysed reaction is chorismate + L-glutamine = 4-amino-4-deoxychorismate + L-glutamate. It participates in cofactor biosynthesis; tetrahydrofolate biosynthesis; 4-aminobenzoate from chorismate: step 1/2. The protein operates within antibiotic biosynthesis; candicidin biosynthesis. Bifunctional enzyme that catalyzes the biosynthesis of 4-amino-4-deoxychorismate (ADC) from chorismate and glutamine. In the first step, a glutamine amidotransferase generates ammonia that is channelled between the binding sites of glutamine and chorismate and used along with chorismate in the second step, catalyzed by aminodeoxychorismate synthase, to produce ADC. Required for the synthesis of 4-aminobenzoate (PABA), an important component in tetrahydrofolate biosynthesis. Does not possess ADC lyase activity. This chain is Probable aminodeoxychorismate synthase, chloroplastic (ADCS), found in Oryza sativa subsp. japonica (Rice).